A 131-amino-acid chain; its full sequence is Small ribosomal subunit protein uS8 (131 aa).

The protein belongs to the universal ribosomal protein uS8 family. Part of the 30S ribosomal subunit. Contacts proteins S5 and S12.

Functionally, one of the primary rRNA binding proteins, it binds directly to 16S rRNA central domain where it helps coordinate assembly of the platform of the 30S subunit. This Janthinobacterium sp. (strain Marseille) (Minibacterium massiliensis) protein is Small ribosomal subunit protein uS8.